The following is a 423-amino-acid chain: Glycine-rich protein 1 (423 aa).

The signal sequence occupies residues 1–20 (MKKICLTFVFLLSLFPIYSS). 4 disordered regions span residues 28 to 47 (TIES…AGPA), 78 to 133 (DDDN…SKKN), 159 to 219 (KGGS…GAGA), and 236 to 288 (GASA…ASAG). Residues 31–42 (SGSSKSSGSSVG) show a composition bias toward low complexity. Composition is skewed to basic and acidic residues over residues 81–93 (NKDK…DGKT) and 102–111 (QNGDDVKSDN). A compositionally biased stretch (gly residues) spans 159 to 172 (KGGSANNGGEGGAT). The segment covering 173–183 (SAGSAGATSGA) has biased composition (low complexity). Gly residues-rich tracts occupy residues 205–219 (GAGG…GAGA) and 236–247 (GASAGAGAGGAQ). The segment covering 248–284 (GDAEAASAGSTAGSTSSGGAAASGASSGAGSSDSGQG) has biased composition (low complexity).

As to expression, nacreous layer of shell (at protein level).

The protein resides in the secreted. The sequence is that of Glycine-rich protein 1 from Pinctada maxima (Silver-lipped pearl oyster).